The sequence spans 322 residues: Quinolinate synthase (322 aa).

Positions 37 and 54 each coordinate iminosuccinate. Cysteine 99 serves as a coordination point for [4Fe-4S] cluster. Residues 125–127 (YIN) and serine 142 contribute to the iminosuccinate site. A [4Fe-4S] cluster-binding site is contributed by cysteine 185. Iminosuccinate contacts are provided by residues 211–213 (HPE) and threonine 228. Cysteine 278 lines the [4Fe-4S] cluster pocket.

The protein belongs to the quinolinate synthase family. Type 2 subfamily. The cofactor is [4Fe-4S] cluster.

It localises to the cytoplasm. The catalysed reaction is iminosuccinate + dihydroxyacetone phosphate = quinolinate + phosphate + 2 H2O + H(+). The protein operates within cofactor biosynthesis; NAD(+) biosynthesis; quinolinate from iminoaspartate: step 1/1. In terms of biological role, catalyzes the condensation of iminoaspartate with dihydroxyacetone phosphate to form quinolinate. The chain is Quinolinate synthase from Chlorobaculum parvum (strain DSM 263 / NCIMB 8327) (Chlorobium vibrioforme subsp. thiosulfatophilum).